We begin with the raw amino-acid sequence, 184 residues long: dCTP deaminase (184 aa).

A dCTP-binding site is contributed by 107–112; sequence KSTYAR. Glutamate 133 functions as the Proton donor/acceptor in the catalytic mechanism. Positions 152, 166, and 176 each coordinate dCTP.

It belongs to the dCTP deaminase family. In terms of assembly, homotrimer.

It carries out the reaction dCTP + H2O + H(+) = dUTP + NH4(+). It participates in pyrimidine metabolism; dUMP biosynthesis; dUMP from dCTP (dUTP route): step 1/2. Its function is as follows. Catalyzes the deamination of dCTP to dUTP. This is dCTP deaminase from Herpetosiphon aurantiacus (strain ATCC 23779 / DSM 785 / 114-95).